We begin with the raw amino-acid sequence, 821 residues long: Centrosomal protein of 95 kDa (821 aa).

Disordered stretches follow at residues 310 to 354 (TLCK…FPQK), 390 to 474 (ATGE…DTHH), and 514 to 550 (KEAF…SSKA). Basic and acidic residues-rich tracts occupy residues 325–340 (ESSK…RSEN) and 390–410 (ATGE…HSAN). Positions 427-441 (RKPRPGFSMHRKAPY) are enriched in basic residues. S445, S447, and S449 each carry phosphoserine. Coiled coils occupy residues 578-627 (LTKM…VKKE) and 695-789 (LQIQ…DDDA).

The protein localises to the cytoplasm. It localises to the cytoskeleton. It is found in the microtubule organizing center. Its subcellular location is the centrosome. The protein resides in the spindle pole. The polypeptide is Centrosomal protein of 95 kDa (Cep95) (Rattus norvegicus (Rat)).